A 532-amino-acid polypeptide reads, in one-letter code: Intercellular adhesion molecule 1 (532 aa).

The signal sequence occupies residues 1–27 (MAPSSPRPALPALLVLLGALFPGPGNA). Over 28 to 480 (QTSVSPPKVI…TVNVLSPRYE (453 aa)) the chain is Extracellular. 2 Ig-like C2-type domains span residues 41 to 103 (GGSV…QSTA) and 128 to 193 (GKDL…LDLR). Cystine bridges form between C48/C92, C52/C96, and C135/C186. An N-linked (GlcNAc...) asparagine glycan is attached at N145. The Cell attachment site; atypical motif lies at 152–154 (RGE). N-linked (GlcNAc...) asparagine glycans are attached at residues N183, N202, N267, and N296. Ig-like C2-type domains are found at residues 230–297 (DTQG…LGNQ) and 325–378 (GTEV…LEVA). An intrachain disulfide couples C237 to C290. Cysteines 332 and 371 form a disulfide. Residues N385 and N406 are each glycosylated (N-linked (GlcNAc...) asparagine). 3 disulfides stabilise this stretch: C403–C419, C419–C457, and C431–C457. The region spanning 412-464 (NSQQTPMCQASGNPLPELKCLKDGTFPLPVGESVTVTRDLEGTYLCRARSTQG) is the Ig-like C2-type 5 domain. Residues 481-503 (IVIITVVAAAVIMGTAGLSTYLY) form a helical membrane-spanning segment. Over 504-532 (NRQRKIRKYRLQQAQKGTPMKPNTQATPP) the chain is Cytoplasmic. Phosphothreonine occurs at positions 521 and 530.

The protein belongs to the immunoglobulin superfamily. ICAM family. In terms of assembly, homodimer. Interacts with MUC1 and promotes cell aggregation in epithelial cells. Interacts with ARHGEF26/SGEF. Interacts (on T cell side) with CD81, CD247 and CD9 at immunological synapses between antigen-presenting cells and T cells. Post-translationally, monoubiquitinated, which is promoted by MARCH9 and leads to endocytosis.

It is found in the membrane. In terms of biological role, ICAM proteins are ligands for the leukocyte adhesion protein LFA-1 (integrin alpha-L/beta-2). During leukocyte trans-endothelial migration, ICAM1 engagement promotes the assembly of endothelial apical cups through ARHGEF26/SGEF and RHOG activation. This chain is Intercellular adhesion molecule 1 (ICAM1), found in Pan paniscus (Pygmy chimpanzee).